A 230-amino-acid polypeptide reads, in one-letter code: 7-cyano-7-deazaguanine synthase (230 aa).

8-18 (FSGGQDSTTCL) is a binding site for ATP. Zn(2+) contacts are provided by C187, C196, C199, and C202.

The protein belongs to the QueC family. Requires Zn(2+) as cofactor.

The catalysed reaction is 7-carboxy-7-deazaguanine + NH4(+) + ATP = 7-cyano-7-deazaguanine + ADP + phosphate + H2O + H(+). Its pathway is purine metabolism; 7-cyano-7-deazaguanine biosynthesis. Catalyzes the ATP-dependent conversion of 7-carboxy-7-deazaguanine (CDG) to 7-cyano-7-deazaguanine (preQ(0)). This chain is 7-cyano-7-deazaguanine synthase, found in Shewanella amazonensis (strain ATCC BAA-1098 / SB2B).